Reading from the N-terminus, the 404-residue chain is Cysteine desulfurase IscS (404 aa).

Residues 73–74 (AT), N153, Q181, and 201–203 (SAH) contribute to the pyridoxal 5'-phosphate site. An N6-(pyridoxal phosphate)lysine modification is found at K204. T241 is a binding site for pyridoxal 5'-phosphate. C327 acts as the Cysteine persulfide intermediate in catalysis. C327 contacts [2Fe-2S] cluster.

This sequence belongs to the class-V pyridoxal-phosphate-dependent aminotransferase family. NifS/IscS subfamily. In terms of assembly, homodimer. Forms a heterotetramer with IscU, interacts with other sulfur acceptors. The cofactor is pyridoxal 5'-phosphate.

The protein localises to the cytoplasm. The catalysed reaction is (sulfur carrier)-H + L-cysteine = (sulfur carrier)-SH + L-alanine. Its pathway is cofactor biosynthesis; iron-sulfur cluster biosynthesis. Its function is as follows. Master enzyme that delivers sulfur to a number of partners involved in Fe-S cluster assembly, tRNA modification or cofactor biosynthesis. Catalyzes the removal of elemental sulfur atoms from cysteine to produce alanine. Functions as a sulfur delivery protein for Fe-S cluster synthesis onto IscU, an Fe-S scaffold assembly protein, as well as other S acceptor proteins. The chain is Cysteine desulfurase IscS from Anaeromyxobacter sp. (strain K).